We begin with the raw amino-acid sequence, 652 residues long: DNA polymerase epsilon subunit B (652 aa).

This sequence belongs to the DNA polymerase epsilon subunit B family. Heterotetramer. Consists of four subunits: POL2, DPB2, DPB3 and DPB4.

It localises to the nucleus. Its function is as follows. As accessory component of the DNA polymerase epsilon (DNA polymerase II) participates in chromosomal DNA replication. The chain is DNA polymerase epsilon subunit B (DPB2) from Yarrowia lipolytica (strain CLIB 122 / E 150) (Yeast).